Reading from the N-terminus, the 199-residue chain is 3-isopropylmalate dehydratase small subunit (199 aa).

This sequence belongs to the LeuD family. LeuD type 1 subfamily. In terms of assembly, heterodimer of LeuC and LeuD.

It catalyses the reaction (2R,3S)-3-isopropylmalate = (2S)-2-isopropylmalate. Its pathway is amino-acid biosynthesis; L-leucine biosynthesis; L-leucine from 3-methyl-2-oxobutanoate: step 2/4. Catalyzes the isomerization between 2-isopropylmalate and 3-isopropylmalate, via the formation of 2-isopropylmaleate. The chain is 3-isopropylmalate dehydratase small subunit from Bacillus licheniformis (strain ATCC 14580 / DSM 13 / JCM 2505 / CCUG 7422 / NBRC 12200 / NCIMB 9375 / NCTC 10341 / NRRL NRS-1264 / Gibson 46).